The following is a 627-amino-acid chain: 1-deoxy-D-xylulose-5-phosphate synthase (627 aa).

Residues histidine 80 and 121–123 (GHS) contribute to the thiamine diphosphate site. Position 152 (aspartate 152) interacts with Mg(2+). Thiamine diphosphate contacts are provided by residues 153 to 154 (GA), asparagine 181, tyrosine 288, and glutamate 370. Mg(2+) is bound at residue asparagine 181.

It belongs to the transketolase family. DXPS subfamily. As to quaternary structure, homodimer. The cofactor is Mg(2+). Thiamine diphosphate serves as cofactor.

It carries out the reaction D-glyceraldehyde 3-phosphate + pyruvate + H(+) = 1-deoxy-D-xylulose 5-phosphate + CO2. It functions in the pathway metabolic intermediate biosynthesis; 1-deoxy-D-xylulose 5-phosphate biosynthesis; 1-deoxy-D-xylulose 5-phosphate from D-glyceraldehyde 3-phosphate and pyruvate: step 1/1. Catalyzes the acyloin condensation reaction between C atoms 2 and 3 of pyruvate and glyceraldehyde 3-phosphate to yield 1-deoxy-D-xylulose-5-phosphate (DXP). This chain is 1-deoxy-D-xylulose-5-phosphate synthase, found in Vibrio atlanticus (strain LGP32) (Vibrio splendidus (strain Mel32)).